The following is a 307-amino-acid chain: UDP-3-O-acyl-N-acetylglucosamine deacetylase (307 aa).

H80, H239, and D243 together coordinate Zn(2+). H266 serves as the catalytic Proton donor.

It belongs to the LpxC family. Requires Zn(2+) as cofactor.

The catalysed reaction is a UDP-3-O-[(3R)-3-hydroxyacyl]-N-acetyl-alpha-D-glucosamine + H2O = a UDP-3-O-[(3R)-3-hydroxyacyl]-alpha-D-glucosamine + acetate. It functions in the pathway glycolipid biosynthesis; lipid IV(A) biosynthesis; lipid IV(A) from (3R)-3-hydroxytetradecanoyl-[acyl-carrier-protein] and UDP-N-acetyl-alpha-D-glucosamine: step 2/6. In terms of biological role, catalyzes the hydrolysis of UDP-3-O-myristoyl-N-acetylglucosamine to form UDP-3-O-myristoylglucosamine and acetate, the committed step in lipid A biosynthesis. The protein is UDP-3-O-acyl-N-acetylglucosamine deacetylase of Neisseria meningitidis serogroup C / serotype 2a (strain ATCC 700532 / DSM 15464 / FAM18).